A 650-amino-acid polypeptide reads, in one-letter code: Exonuclease 3'-5' domain-containing protein 2 (650 aa).

Residues 1–6 (MSRQNL) are Mitochondrial intermembrane-facing. Residues 7–29 (VALTVTTLLGVAMGGFVLWKGIQ) form a helical membrane-spanning segment. Residues 30–650 (RRWSKTSRVM…YGDDLPIKLS (621 aa)) are Cytoplasmic-facing. The disordered stretch occupies residues 34–89 (KTSRVMQQQPQQPQQPQQPQPQPQPQPQPQPEHPQPQQQVPGGREWPPPEDDQLPF). Over residues 49-67 (PQQPQPQPQPQPQPQPEHP) the composition is skewed to pro residues. Residues Asp-137, Glu-139, and Asp-275 each coordinate a divalent metal cation. The region spanning 184 to 276 (ILADGAILKV…DQVTYAARDA (93 aa)) is the 3'-5' exonuclease domain. The tract at residues 340 to 373 (SQLKPRNRKAKTDRMVPGNNQGRDPRKHKRKPLG) is disordered.

This sequence belongs to the EXD2 family. In terms of assembly, homodimer. Interacts with RBBP8, MRE11 and BRCA1. It depends on Mg(2+) as a cofactor. Requires Mn(2+) as cofactor.

Its subcellular location is the mitochondrion outer membrane. The protein localises to the mitochondrion matrix. It localises to the nucleus. It is found in the chromosome. The catalysed reaction is Exonucleolytic cleavage in the 3'- to 5'-direction to yield nucleoside 5'-phosphates.. Functionally, exonuclease that has both 3'-5' exoribonuclease and exodeoxyribonuclease activities, depending on the divalent metal cation used as cofactor. In presence of Mg(2+), only shows 3'-5' exoribonuclease activity, while it shows both exoribonuclease and exodeoxyribonuclease activities in presence of Mn(2+). Acts as an exoribonuclease in mitochondrion, possibly by regulating ATP production and mitochondrial translation. Also involved in the response to DNA damage. Acts as 3'-5' exodeoxyribonuclease for double-strand breaks resection and efficient homologous recombination. Plays a key role in controlling the initial steps of chromosomal break repair, it is recruited to chromatin in a damage-dependent manner and functionally interacts with the MRN complex to accelerate resection through its 3'-5' exonuclease activity, which efficiently processes double-stranded DNA substrates containing nicks. Also involved in response to replicative stress: recruited to stalled forks and is required to stabilize and restart stalled replication forks by restraining excessive fork regression, thereby suppressing their degradation. The polypeptide is Exonuclease 3'-5' domain-containing protein 2 (Mus musculus (Mouse)).